The primary structure comprises 236 residues: Pyridoxal phosphate homeostasis protein (236 aa).

Lys36 is modified (N6-(pyridoxal phosphate)lysine).

It belongs to the pyridoxal phosphate-binding protein YggS/PROSC family.

Pyridoxal 5'-phosphate (PLP)-binding protein, which is involved in PLP homeostasis. The chain is Pyridoxal phosphate homeostasis protein from Vibrio cholerae serotype O1 (strain ATCC 39315 / El Tor Inaba N16961).